The sequence spans 108 residues: Small ribosomal subunit protein uS17 (108 aa).

Belongs to the universal ribosomal protein uS17 family. As to quaternary structure, part of the 30S ribosomal subunit.

One of the primary rRNA binding proteins, it binds specifically to the 5'-end of 16S ribosomal RNA. The chain is Small ribosomal subunit protein uS17 from Methanospirillum hungatei JF-1 (strain ATCC 27890 / DSM 864 / NBRC 100397 / JF-1).